Reading from the N-terminus, the 171-residue chain is Shikimate kinase (171 aa).

14 to 19 lines the ATP pocket; sequence GAGKST. S18 is a Mg(2+) binding site. Substrate-binding residues include D36, R60, and G82. R120 is an ATP binding site. Position 139 (R139) interacts with substrate. Position 156 (Q156) interacts with ATP.

The protein belongs to the shikimate kinase family. In terms of assembly, monomer. Requires Mg(2+) as cofactor.

The protein resides in the cytoplasm. It carries out the reaction shikimate + ATP = 3-phosphoshikimate + ADP + H(+). It functions in the pathway metabolic intermediate biosynthesis; chorismate biosynthesis; chorismate from D-erythrose 4-phosphate and phosphoenolpyruvate: step 5/7. Catalyzes the specific phosphorylation of the 3-hydroxyl group of shikimic acid using ATP as a cosubstrate. In Pseudoalteromonas atlantica (strain T6c / ATCC BAA-1087), this protein is Shikimate kinase.